The primary structure comprises 311 residues: Linearmycin resistance ATP-binding protein LnrL (311 aa).

The region spanning 2–232 is the ABC transporter domain; the sequence is LQAENIKKAY…LGGDTIIQLT (231 aa). Residue 34-41 participates in ATP binding; the sequence is GPNGAGKS.

It belongs to the ABC transporter superfamily. As to quaternary structure, the complex is composed of two ATP-binding proteins (LnrL) and two transmembrane proteins (LnrM and LnrN).

Its function is as follows. Required for resistance to linearmycins, a family of antibiotic-specialized metabolites produced by some streptomycetes. Part of the ABC transporter complex LnrLMN that probably facilitates linearmycin removal from the membrane. Responsible for energy coupling to the transport system. Also mediates KinC-dependent biofilm morphology. The sequence is that of Linearmycin resistance ATP-binding protein LnrL from Bacillus subtilis (strain 168).